The primary structure comprises 483 residues: Malonate-semialdehyde dehydrogenase 2 (483 aa).

Residues Phe-152, Lys-176, Glu-179, Arg-180, and Ser-229 each coordinate NAD(+). The Nucleophile role is filled by Cys-284. Glu-384 contributes to the NAD(+) binding site.

It belongs to the aldehyde dehydrogenase family. IolA subfamily. In terms of assembly, homotetramer.

It carries out the reaction 3-oxopropanoate + NAD(+) + CoA + H2O = hydrogencarbonate + acetyl-CoA + NADH + H(+). The catalysed reaction is 2-methyl-3-oxopropanoate + NAD(+) + CoA + H2O = propanoyl-CoA + hydrogencarbonate + NADH + H(+). It participates in polyol metabolism; myo-inositol degradation into acetyl-CoA; acetyl-CoA from myo-inositol: step 7/7. Catalyzes the oxidation of malonate semialdehyde (MSA) and methylmalonate semialdehyde (MMSA) into acetyl-CoA and propanoyl-CoA, respectively. Is involved in a myo-inositol catabolic pathway. Bicarbonate, and not CO2, is the end-product of the enzymatic reaction. This is Malonate-semialdehyde dehydrogenase 2 from Bacillus mycoides (strain KBAB4) (Bacillus weihenstephanensis).